We begin with the raw amino-acid sequence, 67 residues long: Large ribosomal subunit protein bL35 (67 aa).

This sequence belongs to the bacterial ribosomal protein bL35 family.

The sequence is that of Large ribosomal subunit protein bL35 from Sinorhizobium medicae (strain WSM419) (Ensifer medicae).